Reading from the N-terminus, the 453-residue chain is UPF0210 protein Mbur_0828 (453 aa).

The protein belongs to the UPF0210 family.

This chain is UPF0210 protein Mbur_0828, found in Methanococcoides burtonii (strain DSM 6242 / NBRC 107633 / OCM 468 / ACE-M).